A 407-amino-acid polypeptide reads, in one-letter code: 45 kDa calcium-binding protein (407 aa).

Positions 1 to 35 (MVWSWVAMASRWGPLVGLAPRCLWLLGAVLLMDAS) are cleaved as a signal peptide. An N-linked (GlcNAc...) asparagine glycan is attached at Asn40. EF-hand domains are found at residues 98 to 133 (RSRR…KTAE) and 137 to 172 (EAME…SKGH). Ser99 carries the post-translational modification Phosphoserine. Ca(2+) contacts are provided by Asp111, Asn113, Asp115, Lys117, Glu122, Asp150, Asp152, Asp154, His156, and Glu161. Phosphothreonine occurs at positions 193 and 217. The segment covering 249-259 (GSSLAGAPGPG) has biased composition (low complexity). Residues 249 to 282 (GSSLAGAPGPGDQRQGPGIAGKSGKVLREPQPGC) are disordered. Positions 291, 293, 295, 297, and 302 each coordinate Ca(2+). EF-hand domains lie at 291-313 (DQDG…TVEN), 323-358 (WVKD…MNEY), and 359-394 (NALN…FTGS). A Phosphothreonine modification is found at Thr310. Asp336, Asn338, and Asp340 together coordinate Ca(2+). Thr344 carries the phosphothreonine modification. Ca(2+)-binding residues include Glu347, Asp372, Asn374, Asn376, His378, and Glu383. The interval 354 to 407 (PMNEYNALNEAKQMIAVADENQNHHLEPEEVLKYSEFFTGSKLVDYARSVHEEF) is necessary for intracellular retention in Golgi apparatus lumen.

Belongs to the CREC family.

The protein localises to the golgi apparatus lumen. Functionally, may regulate calcium-dependent activities in the endoplasmic reticulum lumen or post-ER compartment. The sequence is that of 45 kDa calcium-binding protein (SDF4) from Macaca fascicularis (Crab-eating macaque).